Reading from the N-terminus, the 243-residue chain is Probable transcriptional regulatory protein LSEI_1022 (243 aa).

Residues 1-23 form a disordered region; the sequence is MSGHSKWHNIQGRKNAQDSKRGK.

Belongs to the TACO1 family.

The protein resides in the cytoplasm. The protein is Probable transcriptional regulatory protein LSEI_1022 of Lacticaseibacillus paracasei (strain ATCC 334 / BCRC 17002 / CCUG 31169 / CIP 107868 / KCTC 3260 / NRRL B-441) (Lactobacillus paracasei).